Here is a 79-residue protein sequence, read N- to C-terminus: EAMZP30-47 protein (79 aa).

A compositionally biased stretch (low complexity) spans 1–12 (HAASPRGRPQQR). The disordered stretch occupies residues 1–47 (HAASPRGRPQQRSSRHGAEGPDTTRRGSCCSSSSSCCRPSTPRHPHN). Residues 16–25 (HGAEGPDTTR) show a composition bias toward basic and acidic residues. Over residues 28–37 (SCCSSSSSCC) the composition is skewed to low complexity.

It localises to the membrane. Its subcellular location is the cell membrane. It is found in the cytoplasmic vesicle. The protein resides in the secretory vesicle. The protein localises to the rhoptry. The chain is EAMZP30-47 protein (CMC17) from Eimeria acervulina (Coccidian parasite).